The chain runs to 139 residues: NADPH-dependent 7-cyano-7-deazaguanine reductase (139 aa).

Cysteine 34 (thioimide intermediate) is an active-site residue. The active-site Proton donor is aspartate 41. Substrate contacts are provided by residues valine 56–leucine 58 and histidine 75–glutamate 76.

The protein belongs to the GTP cyclohydrolase I family. QueF type 1 subfamily.

The protein resides in the cytoplasm. The catalysed reaction is 7-aminomethyl-7-carbaguanine + 2 NADP(+) = 7-cyano-7-deazaguanine + 2 NADPH + 3 H(+). It functions in the pathway tRNA modification; tRNA-queuosine biosynthesis. Functionally, catalyzes the NADPH-dependent reduction of 7-cyano-7-deazaguanine (preQ0) to 7-aminomethyl-7-deazaguanine (preQ1). This is NADPH-dependent 7-cyano-7-deazaguanine reductase from Nitrosospira multiformis (strain ATCC 25196 / NCIMB 11849 / C 71).